The sequence spans 479 residues: Cyclic AMP-responsive element-binding protein 3-like protein 3 (479 aa).

Topologically, residues 1–317 are cytoplasmic; it reads MDGDIAAGKM…QSTSKPAHAG (317 aa). Positions 67 to 144 are disordered; that stretch reads CILGPGDSDP…CPEPPRTQVQ (78 aa). Over residues 98-110 the composition is skewed to polar residues; that stretch reads PQDTPPRSGTEPA. The bZIP domain maps to 239 to 302; the sequence is VLKKIRRKIR…LSLLEQLKHL (64 aa). Positions 241–270 are basic motif; the sequence is KKIRRKIRNKQSAQESRKKKKEYIDGLENR. The tract at residues 281 to 302 is leucine-zipper; it reads LQRKVLHLEKQNLSLLEQLKHL. Lys290 participates in a covalent cross-link: Glycyl lysine isopeptide (Lys-Gly) (interchain with G-Cter in ubiquitin). Residues 318–338 form a helical; Signal-anchor for type II membrane protein membrane-spanning segment; it reads TCIAVLLLSFALIILPSISPF. Residues 339-479 lie on the Lumenal side of the membrane; sequence NSNKVDSPGD…RLVQDALGVL (141 aa). N-linked (GlcNAc...) asparagine glycans are attached at residues Asn411, Asn418, and Asn425.

This sequence belongs to the bZIP family. ATF subfamily. In terms of assembly, binds DNA as a dimer. May form homodimers. Interacts with ATF6. Interacts with SYNV1/HRD1; this interaction leads to CREB3L3 ubiquitination and proteasomal degradation. In terms of processing, following ER stress a fragment containing the cytoplasmic transcription factor domain is released by proteolysis. The cleavage seems to be performed sequentially by site-1 and site-2 proteases. Post-translationally, N-glycosylation is required for optimal proteolytic activation. Ubiquitinated at Lys-290 by SYNV1/HRD1 via 'Lys-27'-linked ubiquitin. As to expression, expressed in adult liver (at protein level) and small intestine.

It localises to the endoplasmic reticulum membrane. The protein resides in the nucleus. Transcription factor that may act during endoplasmic reticulum (ER) stress by activating unfolded protein response target genes. Activated in response to cAMP stimulation. Binds to the cAMP response element (CRE). Activates transcription through box-B element. Activates transcription through CRE. May function synergistically with ATF6. In acute inflammatory response, may activate expression of acute phase response (APR) genes. May be involved in growth suppression. Regulates FGF21 transcription. Plays a crucial role in the regulation of triglyceride metabolism and is required for the maintenance of normal plasma triglyceride concentrations. The protein is Cyclic AMP-responsive element-binding protein 3-like protein 3 (Creb3l3) of Mus musculus (Mouse).